A 105-amino-acid polypeptide reads, in one-letter code: Hydrogen cyanide synthase subunit HcnA (105 aa).

One can recognise a 2Fe-2S ferredoxin-type domain in the interval 16-97 (ADMTISLNGQ…GMQVQTLSNR (82 aa)). 4 residues coordinate [2Fe-2S] cluster: Cys-60, Cys-65, Cys-68, and Cys-81.

In terms of assembly, heterotrimer of HcnA, HcnB and HcnC.

It is found in the cell membrane. It carries out the reaction glycine + 2 A = hydrogen cyanide + 2 AH2 + CO2. Functionally, a three-component membrane-bound flavoenzyme that catalyzes the formation of hydrogen cyanide, a secondary metabolite, by transfer of electrons to a cyanide-resistant branch of the aerobic respiratory chain. Contributes to suppression of black root rot of tobacco. The sequence is that of Hydrogen cyanide synthase subunit HcnA from Pseudomonas protegens (strain DSM 19095 / LMG 27888 / CFBP 6595 / CHA0).